The primary structure comprises 210 residues: MNANTDILSLRVHAALDALRRGLPVIVADDADRENEADLILAADTLTVPEMARMIRDGSGIVCLCLTPERAERLQLPPMAAENGSRYGTAFTVAIEAAQGVTTGVSAADRTTTIRAAIHPDAKPGDLVRPGHVYPIVARAGGVRERRGHTEASVELARLAGFSPAGVLCELMNPDGTMMRGQQVQDYAERHDLPQLSVAELAEWLQREPA.

Residues 33 to 34 (RE), Asp38, 146 to 150 (RRGHT), and Glu170 contribute to the D-ribulose 5-phosphate site. Glu34 serves as a coordination point for Mg(2+). His149 provides a ligand contact to Mg(2+).

The protein belongs to the DHBP synthase family. As to quaternary structure, homodimer. Requires Mg(2+) as cofactor. The cofactor is Mn(2+).

The catalysed reaction is D-ribulose 5-phosphate = (2S)-2-hydroxy-3-oxobutyl phosphate + formate + H(+). The protein operates within cofactor biosynthesis; riboflavin biosynthesis; 2-hydroxy-3-oxobutyl phosphate from D-ribulose 5-phosphate: step 1/1. In terms of biological role, catalyzes the conversion of D-ribulose 5-phosphate to formate and 3,4-dihydroxy-2-butanone 4-phosphate. The chain is 3,4-dihydroxy-2-butanone 4-phosphate synthase from Chromobacterium violaceum (strain ATCC 12472 / DSM 30191 / JCM 1249 / CCUG 213 / NBRC 12614 / NCIMB 9131 / NCTC 9757 / MK).